The primary structure comprises 263 residues: Shikimate dehydrogenase (NADP(+)) (263 aa).

Shikimate is bound by residues 16–18 and threonine 65; that span reads SKS. Lysine 69 functions as the Proton acceptor in the catalytic mechanism. Asparagine 90 and aspartate 105 together coordinate shikimate. NADP(+) contacts are provided by residues 125-129 and leucine 208; that span reads GSGGS. Residue tyrosine 210 participates in shikimate binding. Glycine 230 contacts NADP(+).

Belongs to the shikimate dehydrogenase family. In terms of assembly, homodimer.

It catalyses the reaction shikimate + NADP(+) = 3-dehydroshikimate + NADPH + H(+). It participates in metabolic intermediate biosynthesis; chorismate biosynthesis; chorismate from D-erythrose 4-phosphate and phosphoenolpyruvate: step 4/7. In terms of biological role, involved in the biosynthesis of the chorismate, which leads to the biosynthesis of aromatic amino acids. Catalyzes the reversible NADPH linked reduction of 3-dehydroshikimate (DHSA) to yield shikimate (SA). The protein is Shikimate dehydrogenase (NADP(+)) of Helicobacter pylori (strain G27).